We begin with the raw amino-acid sequence, 380 residues long: Cytochrome b (380 aa).

A run of 4 helical transmembrane segments spans residues 33 to 53, 77 to 98, 113 to 133, and 178 to 198; these read FGSL…FLAM, WLIR…FIHV, WNIG…GYVL, and FFAF…VHLL. Heme b is bound by residues H83 and H97. 2 residues coordinate heme b: H182 and H196. Residue H201 coordinates a ubiquinone. Helical transmembrane passes span 226–246, 288–308, 320–340, and 347–367; these read IKDL…VLFF, LGGV…PLLN, ITQV…XXXX, and XXXX…IFMP.

The protein belongs to the cytochrome b family. The cytochrome bc1 complex contains 11 subunits: 3 respiratory subunits (MT-CYB, CYC1 and UQCRFS1), 2 core proteins (UQCRC1 and UQCRC2) and 6 low-molecular weight proteins (UQCRH/QCR6, UQCRB/QCR7, UQCRQ/QCR8, UQCR10/QCR9, UQCR11/QCR10 and a cleavage product of UQCRFS1). This cytochrome bc1 complex then forms a dimer. Requires heme b as cofactor.

It is found in the mitochondrion inner membrane. Its function is as follows. Component of the ubiquinol-cytochrome c reductase complex (complex III or cytochrome b-c1 complex) that is part of the mitochondrial respiratory chain. The b-c1 complex mediates electron transfer from ubiquinol to cytochrome c. Contributes to the generation of a proton gradient across the mitochondrial membrane that is then used for ATP synthesis. The sequence is that of Cytochrome b (MT-CYB) from Rhipidomys leucodactylus (White-footed climbing mouse).